The following is a 330-amino-acid chain: 5-dehydro-2-deoxygluconokinase (330 aa).

It belongs to the carbohydrate kinase PfkB family.

It catalyses the reaction 5-dehydro-2-deoxy-D-gluconate + ATP = 6-phospho-5-dehydro-2-deoxy-D-gluconate + ADP + H(+). It functions in the pathway polyol metabolism; myo-inositol degradation into acetyl-CoA; acetyl-CoA from myo-inositol: step 5/7. Functionally, catalyzes the phosphorylation of 5-dehydro-2-deoxy-D-gluconate (2-deoxy-5-keto-D-gluconate or DKG) to 6-phospho-5-dehydro-2-deoxy-D-gluconate (DKGP). The polypeptide is 5-dehydro-2-deoxygluconokinase (Bacillus velezensis (strain DSM 23117 / BGSC 10A6 / LMG 26770 / FZB42) (Bacillus amyloliquefaciens subsp. plantarum)).